We begin with the raw amino-acid sequence, 589 residues long: Protein NRT1/ PTR FAMILY 4.7 (589 aa).

12 helical membrane-spanning segments follow: residues 59–79, 105–125, 127–147, 160–180, 201–221, 230–250, 344–364, 383–403, 429–449, 471–491, 520–540, and 560–580; these read GMLA…AFLA, AFMG…DAFF, TFHI…VLTV, VFLF…KGSL, FFFN…VTVV, WSYG…VFLA, IVIK…CLAQ, FTVP…ILAP, IGTG…VETK, LPIT…ADLF, LAMG…VTGL, and FYWL…FWAS.

The protein belongs to the major facilitator superfamily. Proton-dependent oligopeptide transporter (POT/PTR) (TC 2.A.17) family. Expressed in flowers.

Its subcellular location is the membrane. This chain is Protein NRT1/ PTR FAMILY 4.7 (NPF4.7), found in Arabidopsis thaliana (Mouse-ear cress).